The primary structure comprises 498 residues: Glycerol kinase (498 aa).

Position 11 (Thr11) interacts with ADP. ATP contacts are provided by Thr11, Ser12, and Ser13. Thr11 lines the sn-glycerol 3-phosphate pocket. Residue Arg15 coordinates ADP. 4 residues coordinate sn-glycerol 3-phosphate: Arg81, Glu82, Tyr133, and Asp242. The glycerol site is built by Arg81, Glu82, Tyr133, Asp242, and Gln243. Residues Thr264 and Gly307 each contribute to the ADP site. ATP contacts are provided by Thr264, Gly307, Gln311, and Gly412. Residues Gly412 and Asn416 each coordinate ADP.

Belongs to the FGGY kinase family.

The enzyme catalyses glycerol + ATP = sn-glycerol 3-phosphate + ADP + H(+). It functions in the pathway polyol metabolism; glycerol degradation via glycerol kinase pathway; sn-glycerol 3-phosphate from glycerol: step 1/1. With respect to regulation, inhibited by fructose 1,6-bisphosphate (FBP). Key enzyme in the regulation of glycerol uptake and metabolism. Catalyzes the phosphorylation of glycerol to yield sn-glycerol 3-phosphate. The chain is Glycerol kinase from Delftia acidovorans (strain DSM 14801 / SPH-1).